The chain runs to 100 residues: NADH-quinone oxidoreductase subunit K (100 aa).

Transmembrane regions (helical) follow at residues 2 to 22, 28 to 48, and 60 to 80; these read IPLQ…LTGV, LLFM…AFVV, and VMFI…LALL.

It belongs to the complex I subunit 4L family. As to quaternary structure, NDH-1 is composed of 13 different subunits. Subunits NuoA, H, J, K, L, M, N constitute the membrane sector of the complex.

It is found in the cell inner membrane. The catalysed reaction is a quinone + NADH + 5 H(+)(in) = a quinol + NAD(+) + 4 H(+)(out). Functionally, NDH-1 shuttles electrons from NADH, via FMN and iron-sulfur (Fe-S) centers, to quinones in the respiratory chain. The immediate electron acceptor for the enzyme in this species is believed to be ubiquinone. Couples the redox reaction to proton translocation (for every two electrons transferred, four hydrogen ions are translocated across the cytoplasmic membrane), and thus conserves the redox energy in a proton gradient. This is NADH-quinone oxidoreductase subunit K from Erwinia tasmaniensis (strain DSM 17950 / CFBP 7177 / CIP 109463 / NCPPB 4357 / Et1/99).